A 263-amino-acid chain; its full sequence is Indole-3-glycerol phosphate synthase (263 aa).

The protein belongs to the TrpC family.

The enzyme catalyses 1-(2-carboxyphenylamino)-1-deoxy-D-ribulose 5-phosphate + H(+) = (1S,2R)-1-C-(indol-3-yl)glycerol 3-phosphate + CO2 + H2O. It participates in amino-acid biosynthesis; L-tryptophan biosynthesis; L-tryptophan from chorismate: step 4/5. The polypeptide is Indole-3-glycerol phosphate synthase (Polaromonas naphthalenivorans (strain CJ2)).